Here is a 264-residue protein sequence, read N- to C-terminus: Thymidylate synthase (264 aa).

Arg-21 provides a ligand contact to dUMP. (6R)-5,10-methylene-5,6,7,8-tetrahydrofolate is bound at residue His-51. Position 126 to 127 (126 to 127) interacts with dUMP; the sequence is RR. The Nucleophile role is filled by Cys-146. DUMP is bound by residues 166–169, Asn-177, and 207–209; these read RSAD and HLY. Residue Asp-169 participates in (6R)-5,10-methylene-5,6,7,8-tetrahydrofolate binding. Residue Ala-263 coordinates (6R)-5,10-methylene-5,6,7,8-tetrahydrofolate.

The protein belongs to the thymidylate synthase family. Bacterial-type ThyA subfamily. As to quaternary structure, homodimer.

It localises to the cytoplasm. It carries out the reaction dUMP + (6R)-5,10-methylene-5,6,7,8-tetrahydrofolate = 7,8-dihydrofolate + dTMP. It functions in the pathway pyrimidine metabolism; dTTP biosynthesis. Functionally, catalyzes the reductive methylation of 2'-deoxyuridine-5'-monophosphate (dUMP) to 2'-deoxythymidine-5'-monophosphate (dTMP) while utilizing 5,10-methylenetetrahydrofolate (mTHF) as the methyl donor and reductant in the reaction, yielding dihydrofolate (DHF) as a by-product. This enzymatic reaction provides an intracellular de novo source of dTMP, an essential precursor for DNA biosynthesis. This is Thymidylate synthase from Rhizobium johnstonii (strain DSM 114642 / LMG 32736 / 3841) (Rhizobium leguminosarum bv. viciae).